We begin with the raw amino-acid sequence, 682 residues long: Potassium-transporting ATPase ATP-binding subunit (682 aa).

4 helical membrane passes run 34-54 (PVMF…IAMA), 62-82 (ALFS…ANFA), 219-239 (IALT…TATL), and 254-274 (VLVA…LSAI). The active-site 4-aspartylphosphate intermediate is Asp307. Residues Asp344, Glu348, 377 to 384 (FTAQSRMS), and Lys395 contribute to the ATP site. Asp518 and Asp522 together coordinate Mg(2+). 3 helical membrane-spanning segments follow: residues 588–608 (FAII…LNIM), 616–636 (AILS…PLAL), and 656–676 (IYGL…DLLL).

This sequence belongs to the cation transport ATPase (P-type) (TC 3.A.3) family. Type IA subfamily. As to quaternary structure, the system is composed of three essential subunits: KdpA, KdpB and KdpC.

It is found in the cell inner membrane. It catalyses the reaction K(+)(out) + ATP + H2O = K(+)(in) + ADP + phosphate + H(+). In terms of biological role, part of the high-affinity ATP-driven potassium transport (or Kdp) system, which catalyzes the hydrolysis of ATP coupled with the electrogenic transport of potassium into the cytoplasm. This subunit is responsible for energy coupling to the transport system and for the release of the potassium ions to the cytoplasm. This chain is Potassium-transporting ATPase ATP-binding subunit, found in Escherichia coli O9:H4 (strain HS).